Reading from the N-terminus, the 463-residue chain is Xanthone prenyltransferase B (463 aa).

The protein belongs to the tryptophan dimethylallyltransferase family.

It participates in secondary metabolite biosynthesis. Its activity is regulated as follows. Mn(2+) and Co(2+) strongly enhance prenylation activity. In terms of biological role, dehydrogenase involved in the conversion of monodictyphenone to the prenyl xanthones such as emericellin, shamixanthone and epishamixanthone. Monodictyphenone is first converted to variecoxanthone A via a paeciloxanthone intermediate by the consecutive actions of the FAD-dependent monooxygenase mdpD and the xanthone prenyltransferase xptB. XptB catalyzes regular O-prenylation at the hydroxy group of C-7 of the xanthone ring. Variecoxanthone A is further prenylated to emericellin by xptA before being reduced to shamixanthone and epishamixanthone by the dehydrogenase xptC. This is Xanthone prenyltransferase B from Emericella nidulans (strain FGSC A4 / ATCC 38163 / CBS 112.46 / NRRL 194 / M139) (Aspergillus nidulans).